Reading from the N-terminus, the 273-residue chain is MGLSASSPAATAQSAAEPSKQHQVASPPSECPMHQEKMRGCPMHMKASDRRAENTDDVPAHQERAYEYVACPVKSGASQVNDDIDPSNMMPPPNQLPSPDQPFPLSTVREESSIPRAHSDKKWVYPSEQMFWNAMLRKGWRWKDDDITSEDMTNIIKIHNQNNEQAWKEILKWEALHAMECPCGPSLMRFGGKAKEYSPRARIRSWMGYELPFDRHDWIVDRCGKEVRYVIDYYDGGAVDKNYQFTILDVRPAFDSLSAVWDRMKVAWWRWTS.

Residues 1–18 (MGLSASSPAATAQSAAEP) show a composition bias toward low complexity. The interval 1–39 (MGLSASSPAATAQSAAEPSKQHQVASPPSECPMHQEKMR) is disordered. HRM repeat units lie at residues 30–35 (ECPMHQ) and 40–45 (GCPMHM).

This sequence belongs to the cytochrome c-type heme lyase family.

Its subcellular location is the mitochondrion inner membrane. The catalysed reaction is holo-[cytochrome c] = apo-[cytochrome c] + heme b. In terms of biological role, lyase that catalyzes the covalent linking of the heme group to the cytochrome C apoprotein to produce the mature functional cytochrome. In Gallus gallus (Chicken), this protein is Holocytochrome c-type synthase (HCCS).